The primary structure comprises 442 residues: Ribosome biogenesis protein NOP53 (442 aa).

Residues 242-264 are disordered; it reads KPSSNTNLKKIEDKTPRQAQKSV.

Belongs to the NOP53 family.

The protein resides in the nucleus. Its subcellular location is the nucleolus. It localises to the nucleoplasm. Its function is as follows. May play a role in ribosome biogenesis. The protein is Ribosome biogenesis protein NOP53 of Arabidopsis thaliana (Mouse-ear cress).